The primary structure comprises 37 residues: Large ribosomal subunit protein bL36 (37 aa).

It belongs to the bacterial ribosomal protein bL36 family.

In Thermomicrobium roseum (strain ATCC 27502 / DSM 5159 / P-2), this protein is Large ribosomal subunit protein bL36.